Here is a 431-residue protein sequence, read N- to C-terminus: Adenylosuccinate synthetase (431 aa).

GTP-binding positions include 13–19 and 41–43; these read GDEGKGK and GHT. The active-site Proton acceptor is aspartate 14. Aspartate 14 and glycine 41 together coordinate Mg(2+). IMP is bound by residues 14–17, 39–42, threonine 130, arginine 144, glutamine 225, threonine 240, and arginine 304; these read DEGK and NAGH. Histidine 42 serves as the catalytic Proton donor. 300–306 serves as a coordination point for substrate; sequence ATTGRQR. GTP contacts are provided by residues arginine 306, 332–334, and 414–416; these read KLD and STG.

The protein belongs to the adenylosuccinate synthetase family. Homodimer. Mg(2+) serves as cofactor.

The protein localises to the cytoplasm. It catalyses the reaction IMP + L-aspartate + GTP = N(6)-(1,2-dicarboxyethyl)-AMP + GDP + phosphate + 2 H(+). The protein operates within purine metabolism; AMP biosynthesis via de novo pathway; AMP from IMP: step 1/2. In terms of biological role, plays an important role in the de novo pathway of purine nucleotide biosynthesis. Catalyzes the first committed step in the biosynthesis of AMP from IMP. The sequence is that of Adenylosuccinate synthetase from Saccharophagus degradans (strain 2-40 / ATCC 43961 / DSM 17024).